Reading from the N-terminus, the 146-residue chain is MRHYEIVFIVHPDQSEQVSAMTERYSNIVTGRSGKIHRLEDWGRRQLTYPIQKLHKAHYVLMNIECDQESLNELEHSFKFNDAILRHLVIRMNGPITTPSPMMQEGKSRPPHSSDEDSENTAPAKAKTADSPGEDTRTTEESDPKP.

The interval 94 to 146 (GPITTPSPMMQEGKSRPPHSSDEDSENTAPAKAKTADSPGEDTRTTEESDPKP) is disordered. Composition is skewed to basic and acidic residues over residues 106–115 (GKSRPPHSSD) and 134–146 (EDTR…DPKP).

Belongs to the bacterial ribosomal protein bS6 family.

Functionally, binds together with bS18 to 16S ribosomal RNA. The sequence is that of Small ribosomal subunit protein bS6 from Nitrosomonas europaea (strain ATCC 19718 / CIP 103999 / KCTC 2705 / NBRC 14298).